The sequence spans 156 residues: ATP synthase subunit b (156 aa).

Residues 7 to 29 traverse the membrane as a helical segment; that stretch reads LLGQAISFALFVWFCMKYVWPPL.

It belongs to the ATPase B chain family. As to quaternary structure, F-type ATPases have 2 components, F(1) - the catalytic core - and F(0) - the membrane proton channel. F(1) has five subunits: alpha(3), beta(3), gamma(1), delta(1), epsilon(1). F(0) has three main subunits: a(1), b(2) and c(10-14). The alpha and beta chains form an alternating ring which encloses part of the gamma chain. F(1) is attached to F(0) by a central stalk formed by the gamma and epsilon chains, while a peripheral stalk is formed by the delta and b chains.

Its subcellular location is the cell inner membrane. Functionally, f(1)F(0) ATP synthase produces ATP from ADP in the presence of a proton or sodium gradient. F-type ATPases consist of two structural domains, F(1) containing the extramembraneous catalytic core and F(0) containing the membrane proton channel, linked together by a central stalk and a peripheral stalk. During catalysis, ATP synthesis in the catalytic domain of F(1) is coupled via a rotary mechanism of the central stalk subunits to proton translocation. Component of the F(0) channel, it forms part of the peripheral stalk, linking F(1) to F(0). This is ATP synthase subunit b from Vibrio alginolyticus.